The primary structure comprises 191 residues: Small ribosomal subunit protein uS5 (191 aa).

The disordered stretch occupies residues 1-20 (MAGERERGGRERSRDREERD). One can recognise an S5 DRBM domain in the interval 23 to 86 (FVDKLVHINR…ESAKRNLTRV (64 aa)).

Belongs to the universal ribosomal protein uS5 family. As to quaternary structure, part of the 30S ribosomal subunit. Contacts proteins S4 and S8.

Its function is as follows. With S4 and S12 plays an important role in translational accuracy. Functionally, located at the back of the 30S subunit body where it stabilizes the conformation of the head with respect to the body. In Nitrobacter winogradskyi (strain ATCC 25391 / DSM 10237 / CIP 104748 / NCIMB 11846 / Nb-255), this protein is Small ribosomal subunit protein uS5.